The sequence spans 392 residues: Nuclear speckle splicing regulatory protein 1 homolog (392 aa).

Disordered stretches follow at residues 1-73 (MASK…IFDY), 113-169 (RQLE…AFND), and 187-357 (LLND…ARLD). 5 stretches are compositionally biased toward basic and acidic residues: residues 54-65 (KAAEREHQKAEA), 113-132 (RQLE…REKE), 149-160 (KQQEEVKKHREQ), 205-238 (QKNV…KSIY), and 313-357 (KSIE…ARLD). Residues 76 to 132 (NYDEIQAIKNEKKEEARKADKNRESKYAENIIKAHARRQLEQFSREERQQLREREKE) adopt a coiled-coil conformation.

It belongs to the NSRP1 family. In terms of tissue distribution, expressed in the intestine, nervous system and head neurons in both larvae and adults. Expressed in the distal tip cell.

Its subcellular location is the cytoplasm. It localises to the nucleus. Its function is as follows. Required for the cessation of distal tip cell migration at the end of larval morphogenesis. The protein is Nuclear speckle splicing regulatory protein 1 homolog (ccdc-55) of Caenorhabditis elegans.